Consider the following 27-residue polypeptide: Pyruvate dehydrogenase protein X component, mitochondrial (27 aa).

The interval 1 to 27 (FRLSPAARNILEKHSLDASQGTATGPR) is disordered. One can recognise a Peripheral subunit-binding (PSBD) domain in the interval 2-27 (RLSPAARNILEKHSLDASQGTATGPR). At K13 the chain carries N6-acetyllysine. S15 carries the post-translational modification Phosphoserine. Polar residues predominate over residues 17–27 (DASQGTATGPR).

Belongs to the 2-oxoacid dehydrogenase family. In terms of assembly, part of the inner core of the multimeric pyruvate dehydrogenase complex that is composed of about 48 DLAT and 12 PDHX molecules. This core binds multiple copies of pyruvate dehydrogenase (subunits PDH1A and PDHB, E1), dihydrolipoamide acetyltransferase (DLAT, E2) and lipoamide dehydrogenase (DLD, E3). Interacts with SIRT4. Interacts with DLD.

Its subcellular location is the mitochondrion matrix. In terms of biological role, required for anchoring dihydrolipoamide dehydrogenase (E3) to the dihydrolipoamide transacetylase (E2) core of the pyruvate dehydrogenase complexes of eukaryotes. This specific binding is essential for a functional PDH complex. This is Pyruvate dehydrogenase protein X component, mitochondrial from Mesocricetus auratus (Golden hamster).